The following is a 244-amino-acid chain: Phosphoadenosine 5'-phosphosulfate reductase (244 aa).

Cysteine 239 serves as the catalytic Nucleophile; cysteine thiosulfonate intermediate.

This sequence belongs to the PAPS reductase family. CysH subfamily.

It localises to the cytoplasm. The catalysed reaction is [thioredoxin]-disulfide + sulfite + adenosine 3',5'-bisphosphate + 2 H(+) = [thioredoxin]-dithiol + 3'-phosphoadenylyl sulfate. It participates in sulfur metabolism; hydrogen sulfide biosynthesis; sulfite from sulfate: step 3/3. Functionally, catalyzes the formation of sulfite from phosphoadenosine 5'-phosphosulfate (PAPS) using thioredoxin as an electron donor. In Sodalis glossinidius (strain morsitans), this protein is Phosphoadenosine 5'-phosphosulfate reductase.